The sequence spans 434 residues: MSVTRLSEPLQNILLQDLRNFYDRASRIATLSVSAIAAIKSAWTRGSPFAAATALYPTNEEGKYVIQAEGIRMEFTNYGGAVTNLWLNNSRGEEVDIVLGLDHARDYEDYPKNPYLNGAIGRYAGFMRGGRFDMDGESYQVATNAHNGSSTFNGGDRGWGRSILDIGSHTENSITFVLFDRSWNGFPGTAASCLTHTVTPYEWRVAFGVTPTKKPGPINMSQQAFFNLDGFKKKNLTGSVPVSDKTVRDHKLHLPLSGLRFETDALGLSTGDILGNPRGSEYDFWSASRRIGDVLEKPYMGICDRCQKRQYHNHNPSGAYDTIFQLGRSQPWNKEDVPAAILSSPESGISMKLYSDQEALHVHTWSQKEFPLKLKKGQGQGMVPQHGGISFEMQDWPDGLNHPEWRRESKTIWGMDGLYTAFSSYRFSVDKTEP.

A substrate-binding site is contributed by 125–126 (GF). Residue E392 is the Proton acceptor of the active site.

This sequence belongs to the aldose epimerase family. Monomer.

Its pathway is secondary metabolite biosynthesis. Epimerase; part of the gene cluster that mediates the biosynthesis of fusarielins F, G and H, decaketide compounds with 5 methylations and a decaline core that act as mycoestrogens as they stimulate growth of MCF-7 breast cancer cells. The initial compound in the pathway is produced by the reducing polyketide synthase FSL1. FSL1 lacks an active enoyl reductase (ER) domain and biosynthesis of fusarielins relies on the trans-acting enoyl reductase FSL5, before it is released through hydrolysis catalyzed by the thioesterase FSL2. Fusarielins F, G, and H have a C11=C12 cis double bond and is fully reduced between C10 and C11 and between C12 and C13. FSL3 can be involved in the formation of the C11=C12 cis double bond by moving a hypothetical C10=C11 or C12=C13 trans double bond to form prefusarielin. Prefusarielin is oxygenated at C15 and C16 by the cytochrome P450 monooxygenase FSL4, resulting in fusarielin F, which subsequently is epoxidized into fusarielin G by the same enzyme. The final step in the pathway is a reduction of the carboxylic acid moiety to yield fusarielin H via a still undetermined mechanism. This is Epimerase FSL3 from Gibberella zeae (strain ATCC MYA-4620 / CBS 123657 / FGSC 9075 / NRRL 31084 / PH-1) (Wheat head blight fungus).